The chain runs to 727 residues: Zinc metalloproteinase nas-38 (727 aa).

The signal sequence occupies residues 1–25 (MPSPSYNRHIIIASCFCCLLIFSSA). A propeptide spanning residues 26-114 (ARVPKASKKH…FTQGKREKRK (89 aa)) is cleaved from the precursor. In terms of domain architecture, Peptidase M12A spans 113-312 (RKIGRNPLYK…QAINMAYGCT (200 aa)). 2 disulfides stabilise this stretch: Cys-158–Cys-311 and Cys-179–Cys-199. His-207 is a Zn(2+) binding site. Glu-208 is a catalytic residue. His-211 and His-217 together coordinate Zn(2+). One can recognise an EGF-like domain in the interval 306-345 (NMAYGCTESCADLPCLRNGYTHPNNCSMCACPEGLSGRYC). An N-linked (GlcNAc...) asparagine glycan is attached at Asn-330. Positions 353–469 (AQCGGVIFAT…AGFKAKFWSN (117 aa)) constitute a CUB domain. 2 disulfide bridges follow: Cys-355/Cys-383 and Cys-411/Cys-432. 2 disordered regions span residues 473–506 (PEGV…QSTT) and 532–561 (TPLT…TEPS). A compositionally biased stretch (low complexity) spans 535–554 (TSSSTTTESTTVSSTTQSTT). The region spanning 610 to 658 (ECGCGAWSEWQGECSQQCGGCGHRLRKRECKKEACRKEEKRPCNFSACP) is the TSP type-1 domain. 4 disulfides stabilise this stretch: Cys-611–Cys-644, Cys-623–Cys-652, Cys-627–Cys-657, and Cys-639–Cys-644. Asn-653 and Asn-714 each carry an N-linked (GlcNAc...) asparagine glycan.

It depends on Zn(2+) as a cofactor. In terms of tissue distribution, expressed in the epidermis, the excretory canal cell, duct cell, pore cell, and excretory gland cell. Expressed in an oscillating pattern in epithelial cells with increased expression during the lethargus phase which occurs during molting between larval and adult stages. Not expressed in seam cells or in the RIS neuron.

The protein resides in the secreted. Metalloprotease. As part of the innate immune response to molting and injury to the adult epidermis, positively regulates the activity of the transcription factor sta-2 to promote the expression of epidermal antimicrobial peptides such as nlp-29. Through regulating the expression of epidermal antimicrobial peptides such as nlp-29, modulates sleep duration and locomotion quiescence during the sleep-like state called lethargus which occurs during molting between larval and adult stages. This may occur through the sleep-active RIS neuron. The polypeptide is Zinc metalloproteinase nas-38 (Caenorhabditis elegans).